Here is a 640-residue protein sequence, read N- to C-terminus: DNA mismatch repair protein MutL (640 aa).

Residues 343–389 (TKNTATDQRAENLEVKPDSKEKELQPKESQHPRLVACDLPSGKIMPP) are disordered. Residues 350–373 (QRAENLEVKPDSKEKELQPKESQH) are compositionally biased toward basic and acidic residues.

Belongs to the DNA mismatch repair MutL/HexB family.

This protein is involved in the repair of mismatches in DNA. It is required for dam-dependent methyl-directed DNA mismatch repair. May act as a 'molecular matchmaker', a protein that promotes the formation of a stable complex between two or more DNA-binding proteins in an ATP-dependent manner without itself being part of a final effector complex. The polypeptide is DNA mismatch repair protein MutL (Desulforamulus reducens (strain ATCC BAA-1160 / DSM 100696 / MI-1) (Desulfotomaculum reducens)).